The sequence spans 122 residues: S-protein homolog 23 (122 aa).

The first 20 residues, 1-20 (MQNLSILLVCSFCILGHVSS), serve as a signal peptide directing secretion. The N-linked (GlcNAc...) asparagine glycan is linked to asparagine 86.

Belongs to the plant self-incompatibility (S1) protein family.

Its subcellular location is the secreted. In Arabidopsis thaliana (Mouse-ear cress), this protein is S-protein homolog 23.